Here is a 3124-residue protein sequence, read N- to C-terminus: Collagen alpha-1(XII) chain (3124 aa).

An N-terminal signal peptide occupies residues 1–23 (MRTALCSAVAALCAAALLSSIEA). Positions 27-117 (PPSDLNFTII…GQLTIQTGGP (91 aa)) constitute a Fibronectin type-III 1 domain. A glycan (N-linked (GlcNAc...) asparagine) is linked at asparagine 32. The region spanning 139 to 311 (DLVFLVDGSW…DGIVDIQNEI (173 aa)) is the VWFA 1 domain. O-linked (Xyl...) (chondroitin sulfate) serine glycosylation is present at serine 328. Positions 335–424 (PASNLVATQI…ITIMEKTQQV (90 aa)) constitute a Fibronectin type-III 2 domain. Positions 439-615 (DVVFLVDGSY…RISFELTQSV (177 aa)) constitute a VWFA 2 domain. Fibronectin type-III domains are found at residues 633–722 (PAKN…LEVK), 724–815 (APRN…VRGN), 816–906 (PRNL…LEER), 908–998 (SPRN…VSQS), 999–1087 (ARTV…ASPF), and 1089–1179 (PPRN…TLSD). 3 O-linked (Xyl...) (chondroitin sulfate) serine glycosylation sites follow: serine 797, serine 890, and serine 981. N-linked (GlcNAc...) asparagine glycans are attached at residues asparagine 1006, asparagine 1032, and asparagine 1044. Residues 1075 to 1100 (KSRKAEGTTASPFKPPRNLRTSDSTM) form a disordered region. Residues 1199–1371 (DIVLLVDGSW…SFLASIGEDV (173 aa)) form the VWFA 3 domain. Fibronectin type-III domains are found at residues 1387-1476 (PPSN…YPLS), 1477-1568 (SVRN…LPLP), 1569-1659 (GPRG…VPSP), 1660-1756 (VNLR…TPAP), 1759-1853 (GPRN…TVKN), 1854-1939 (MLVY…LERG), 1940-2030 (TPRN…LPRS), 2031-2121 (GPRN…VGLL), 2122-2210 (PPQN…LYLN), and 2211-2299 (VTDL…LKPT). N-linked (GlcNAc...) asparagine glycosylation is present at asparagine 1512. Residue asparagine 1767 is glycosylated (N-linked (GlcNAc...) asparagine). 2 N-linked (GlcNAc...) asparagine glycosylation sites follow: asparagine 2210 and asparagine 2273. The VWFA 4 domain maps to 2327 to 2500 (DIVFLTDASW…DAFEKIQDNL (174 aa)). Residues 2455-2750 (SGFSVFVVGV…NACTCTQDSV (296 aa)) form a nonhelical region (NC3) region. Residues 2524 to 2716 (GFKMLESYNL…IQNFDIVCSP (193 aa)) form the Laminin G-like domain. Residues asparagine 2532 and asparagine 2683 are each glycosylated (N-linked (GlcNAc...) asparagine). Disordered regions lie at residues 2749–2900 (SVGP…GDRG) and 2935–3080 (PNDY…EGEP). 3 consecutive Collagen-like domains span residues 2751–2802 (GPPG…GPNG), 2807–2858 (GEPG…GPRG), and 2859–2900 (PPGP…GDRG). Residues 2751–2902 (GPPGPPGPPG…KGEKGDRGDI (152 aa)) are triple-helical region (COL2) with 1 imperfection. 2 stretches are compositionally biased toward pro residues: residues 2752 to 2761 (PPGPPGPPGG) and 2788 to 2798 (PPGPQGPPGPQ). A compositionally biased stretch (low complexity) spans 2821–2830 (PGLPGRSGTP). A compositionally biased stretch (pro residues) spans 2832–2841 (LPGPPGPVGP). Low complexity-rich tracts occupy residues 2842–2854 (PGERGFTGKDGPT) and 2865–2878 (APGVPGVAGPSGKP). The Cell attachment site motif lies at 2899 to 2901 (RGD). Positions 2903–2945 (ASQNMMRAVARQVCEQLINGQMSRFNQMLNQIPNDYYSNRNQP) are nonhelical region (NC2). Over residues 2935-2944 (PNDYYSNRNQ) the composition is skewed to polar residues. Residues 2945-2954 (PGPPGPPGPP) are compositionally biased toward pro residues. The Collagen-like 4 domain occupies 2945–2994 (PGPPGPPGPPGAAGTRGEPGPGGRPGFPGPPGVQGPPGERGMPGEKGERG). Residues 2946–3048 (GPPGPPGPPG…RGPPGPPGYC (103 aa)) are triple-helical region (COL1) with 2 imperfections. Gly residues predominate over residues 2961–2970 (GEPGPGGRPG). Residues 3010–3024 (QGESRTGPPGSTGSR) show a composition bias toward low complexity. Residues 3049 to 3124 (DSSQCASIPY…SLSRKAKRKP (76 aa)) form a nonhelical region (NC1) region.

The protein belongs to the fibril-associated collagens with interrupted helices (FACIT) family. Trimer of identical chains each containing 190 kDa of non-triple-helical sequences. Post-translationally, the triple-helical tail is stabilized by disulfide bonds at each end. Prolines at the third position of the tripeptide repeating unit (G-X-Y) are hydroxylated in some or all of the chains. In terms of processing, O-glycosylated; glycosaminoglycan of chondroitin-sulfate type. In terms of tissue distribution, type XII collagen is present in tendons, ligaments, perichondrium, and periosteum, all dense connective tissues containing type I collagen.

It is found in the secreted. The protein resides in the extracellular space. The protein localises to the extracellular matrix. In terms of biological role, type XII collagen interacts with type I collagen-containing fibrils, the COL1 domain could be associated with the surface of the fibrils, and the COL2 and NC3 domains may be localized in the perifibrillar matrix. In Gallus gallus (Chicken), this protein is Collagen alpha-1(XII) chain (COL12A1).